Here is a 259-residue protein sequence, read N- to C-terminus: UPF0246 protein VFMJ11_2214 (259 aa).

Belongs to the UPF0246 family.

In Aliivibrio fischeri (strain MJ11) (Vibrio fischeri), this protein is UPF0246 protein VFMJ11_2214.